Here is a 354-residue protein sequence, read N- to C-terminus: Serine/threonine-protein kinase ppk34 (354 aa).

The region spanning 40–331 is the Protein kinase domain; the sequence is YRLKNMLGYG…IEELLRDPFL (292 aa). ATP is bound by residues 46–54 and lysine 69; that span reads LGYGACSTV. The active-site Proton acceptor is aspartate 200.

This sequence belongs to the protein kinase superfamily. Ser/Thr protein kinase family.

It is found in the cytoplasm. Its subcellular location is the nucleus. It carries out the reaction L-seryl-[protein] + ATP = O-phospho-L-seryl-[protein] + ADP + H(+). The enzyme catalyses L-threonyl-[protein] + ATP = O-phospho-L-threonyl-[protein] + ADP + H(+). This Schizosaccharomyces pombe (strain 972 / ATCC 24843) (Fission yeast) protein is Serine/threonine-protein kinase ppk34 (ppk34).